The following is a 260-amino-acid chain: Proteasome subunit alpha (260 aa).

This sequence belongs to the peptidase T1A family. In terms of assembly, the 20S proteasome core is composed of 14 alpha and 14 beta subunits that assemble into four stacked heptameric rings, resulting in a barrel-shaped structure. The two inner rings, each composed of seven catalytic beta subunits, are sandwiched by two outer rings, each composed of seven alpha subunits. The catalytic chamber with the active sites is on the inside of the barrel. Has a gated structure, the ends of the cylinder being occluded by the N-termini of the alpha-subunits. Is capped at one or both ends by the proteasome regulatory ATPase, PAN.

It is found in the cytoplasm. The formation of the proteasomal ATPase PAN-20S proteasome complex, via the docking of the C-termini of PAN into the intersubunit pockets in the alpha-rings, triggers opening of the gate for substrate entry. Interconversion between the open-gate and close-gate conformations leads to a dynamic regulation of the 20S proteasome proteolysis activity. Component of the proteasome core, a large protease complex with broad specificity involved in protein degradation. The sequence is that of Proteasome subunit alpha from Thermococcus gammatolerans (strain DSM 15229 / JCM 11827 / EJ3).